Reading from the N-terminus, the 473-residue chain is Probable glycine dehydrogenase (decarboxylating) subunit 2 (473 aa).

A disordered region spans residues 1 to 40; sequence MEHYEQARYAPAEGETNEPLLSENDQTTVSVDPSLPDDLT. Lys270 carries the post-translational modification N6-(pyridoxal phosphate)lysine.

It belongs to the GcvP family. C-terminal subunit subfamily. As to quaternary structure, the glycine cleavage system is composed of four proteins: P, T, L and H. In this organism, the P 'protein' is a heterodimer of two subunits. It depends on pyridoxal 5'-phosphate as a cofactor.

It carries out the reaction N(6)-[(R)-lipoyl]-L-lysyl-[glycine-cleavage complex H protein] + glycine + H(+) = N(6)-[(R)-S(8)-aminomethyldihydrolipoyl]-L-lysyl-[glycine-cleavage complex H protein] + CO2. In terms of biological role, the glycine cleavage system catalyzes the degradation of glycine. The P protein binds the alpha-amino group of glycine through its pyridoxal phosphate cofactor; CO(2) is released and the remaining methylamine moiety is then transferred to the lipoamide cofactor of the H protein. This is Probable glycine dehydrogenase (decarboxylating) subunit 2 from Halobacterium salinarum (strain ATCC 700922 / JCM 11081 / NRC-1) (Halobacterium halobium).